A 1129-amino-acid polypeptide reads, in one-letter code: Serine/threonine-protein kinase 11-interacting protein (1129 aa).

8 LRR repeats span residues 107-128 (SLRS…RSVY), 130-150 (QLEV…IALC), 162-183 (VLHT…LELL), 185-206 (SLKI…LKVL), 208-229 (ELQY…SVGN), 232-253 (KLHS…ENLP), 254-275 (NLQH…SGLA), and 279-300 (NLKQ…RALT). Disordered stretches follow at residues 335 to 392 (RLQP…RRGQ), 428 to 475 (DPEY…HVAP), 654 to 678 (GDIY…NHTG), and 696 to 724 (NPTG…GLAA). Positions 337 to 355 (QPSSSATESSCTGDLTDSY) are enriched in polar residues. The segment covering 365–374 (LPRKKSRVKV) has biased composition (basic residues). The segment covering 381-391 (ERSDSEYERRG) has biased composition (basic and acidic residues). Over residues 436–447 (HSPPPRASPSPT) the composition is skewed to pro residues. The span at 448 to 458 (APSSVPKQKSP) shows a compositional bias: low complexity.

Belongs to the STK11IP family.

Its subcellular location is the cytoplasm. The polypeptide is Serine/threonine-protein kinase 11-interacting protein (stk11ip) (Xenopus tropicalis (Western clawed frog)).